A 320-amino-acid chain; its full sequence is Lipoyl synthase (320 aa).

7 residues coordinate [4Fe-4S] cluster: C66, C71, C77, C92, C96, C99, and S306. The Radical SAM core domain maps to 77-295 (CFGHGTATFM…AEIGYAMGFS (219 aa)).

It belongs to the radical SAM superfamily. Lipoyl synthase family. It depends on [4Fe-4S] cluster as a cofactor.

Its subcellular location is the cytoplasm. The enzyme catalyses [[Fe-S] cluster scaffold protein carrying a second [4Fe-4S](2+) cluster] + N(6)-octanoyl-L-lysyl-[protein] + 2 oxidized [2Fe-2S]-[ferredoxin] + 2 S-adenosyl-L-methionine + 4 H(+) = [[Fe-S] cluster scaffold protein] + N(6)-[(R)-dihydrolipoyl]-L-lysyl-[protein] + 4 Fe(3+) + 2 hydrogen sulfide + 2 5'-deoxyadenosine + 2 L-methionine + 2 reduced [2Fe-2S]-[ferredoxin]. It participates in protein modification; protein lipoylation via endogenous pathway; protein N(6)-(lipoyl)lysine from octanoyl-[acyl-carrier-protein]: step 2/2. Catalyzes the radical-mediated insertion of two sulfur atoms into the C-6 and C-8 positions of the octanoyl moiety bound to the lipoyl domains of lipoate-dependent enzymes, thereby converting the octanoylated domains into lipoylated derivatives. The protein is Lipoyl synthase of Thioalkalivibrio sulfidiphilus (strain HL-EbGR7).